Here is a 113-residue protein sequence, read N- to C-terminus: PTS system fructose-like EIIB component 3 (113 aa).

The region spanning 1-100 is the PTS EIIB type-2 domain; it reads MAYLVAVTAC…PQRVMSAVRK (100 aa). Cys-10 serves as the catalytic Phosphocysteine intermediate. Phosphocysteine; by EIIA is present on Cys-10.

Its subcellular location is the cytoplasm. It carries out the reaction D-fructose(out) + N(pros)-phospho-L-histidyl-[protein] = D-fructose 1-phosphate(in) + L-histidyl-[protein]. In terms of biological role, the phosphoenolpyruvate-dependent sugar phosphotransferase system (sugar PTS), a major carbohydrate active transport system, catalyzes the phosphorylation of incoming sugar substrates concomitantly with their translocation across the cell membrane. The chain is PTS system fructose-like EIIB component 3 (frwD) from Escherichia coli (strain K12).